The sequence spans 539 residues: CTP synthase (539 aa).

The tract at residues 1–268 (MSFKSIFLTG…SDFLLNKLGF (268 aa)) is amidoligase domain. Position 14 (S14) interacts with CTP. Position 14 (S14) interacts with UTP. ATP is bound at residue 15-20 (SLGKGL). Y55 lines the L-glutamine pocket. Residue D72 participates in ATP binding. Residues D72 and E142 each coordinate Mg(2+). CTP contacts are provided by residues 149-151 (DIE), 188-193 (KTKPTQ), and K224. Residues 188-193 (KTKPTQ) and K224 each bind UTP. Positions 294–532 (RIGLVGKYLE…IRAAKAYSLE (239 aa)) constitute a Glutamine amidotransferase type-1 domain. G353 serves as a coordination point for L-glutamine. The active-site Nucleophile; for glutamine hydrolysis is C380. Residues 381–384 (LGMQ), E404, and R460 contribute to the L-glutamine site. Catalysis depends on residues H505 and E507.

It belongs to the CTP synthase family. In terms of assembly, homotetramer.

It catalyses the reaction UTP + L-glutamine + ATP + H2O = CTP + L-glutamate + ADP + phosphate + 2 H(+). The catalysed reaction is L-glutamine + H2O = L-glutamate + NH4(+). It carries out the reaction UTP + NH4(+) + ATP = CTP + ADP + phosphate + 2 H(+). The protein operates within pyrimidine metabolism; CTP biosynthesis via de novo pathway; CTP from UDP: step 2/2. Its activity is regulated as follows. Allosterically activated by GTP, when glutamine is the substrate; GTP has no effect on the reaction when ammonia is the substrate. The allosteric effector GTP functions by stabilizing the protein conformation that binds the tetrahedral intermediate(s) formed during glutamine hydrolysis. Inhibited by the product CTP, via allosteric rather than competitive inhibition. In terms of biological role, catalyzes the ATP-dependent amination of UTP to CTP with either L-glutamine or ammonia as the source of nitrogen. Regulates intracellular CTP levels through interactions with the four ribonucleotide triphosphates. The sequence is that of CTP synthase from Chlamydia trachomatis serovar L2 (strain ATCC VR-902B / DSM 19102 / 434/Bu).